The sequence spans 153 residues: Xanthine-guanine phosphoribosyltransferase (153 aa).

5-phospho-alpha-D-ribose 1-diphosphate-binding positions include 37 to 38, R69, and 88 to 96; these read RG and DDLVDTGGT. R69 contributes to the GMP binding site. D89 provides a ligand contact to Mg(2+). Guanine contacts are provided by D92 and I135. Residues D92 and I135 each coordinate xanthine. Residues 92–96 and 134–135 contribute to the GMP site; these read DTGGT and WI.

It belongs to the purine/pyrimidine phosphoribosyltransferase family. XGPT subfamily. As to quaternary structure, homotetramer. It depends on Mg(2+) as a cofactor.

The protein resides in the cell inner membrane. The enzyme catalyses GMP + diphosphate = guanine + 5-phospho-alpha-D-ribose 1-diphosphate. It catalyses the reaction XMP + diphosphate = xanthine + 5-phospho-alpha-D-ribose 1-diphosphate. It carries out the reaction IMP + diphosphate = hypoxanthine + 5-phospho-alpha-D-ribose 1-diphosphate. The protein operates within purine metabolism; GMP biosynthesis via salvage pathway; GMP from guanine: step 1/1. It functions in the pathway purine metabolism; XMP biosynthesis via salvage pathway; XMP from xanthine: step 1/1. In terms of biological role, purine salvage pathway enzyme that catalyzes the transfer of the ribosyl-5-phosphate group from 5-phospho-alpha-D-ribose 1-diphosphate (PRPP) to the N9 position of the 6-oxopurines guanine and xanthine to form the corresponding ribonucleotides GMP (guanosine 5'-monophosphate) and XMP (xanthosine 5'-monophosphate), with the release of PPi. To a lesser extent, also acts on hypoxanthine. The polypeptide is Xanthine-guanine phosphoribosyltransferase (Proteus mirabilis (strain HI4320)).